Reading from the N-terminus, the 320-residue chain is o-succinylbenzoate synthase (320 aa).

Lys-133 acts as the Proton donor in catalysis. Positions 161, 190, and 213 each coordinate Mg(2+). Lys-235 functions as the Proton acceptor in the catalytic mechanism.

This sequence belongs to the mandelate racemase/muconate lactonizing enzyme family. MenC type 1 subfamily. A divalent metal cation is required as a cofactor.

It catalyses the reaction (1R,6R)-6-hydroxy-2-succinyl-cyclohexa-2,4-diene-1-carboxylate = 2-succinylbenzoate + H2O. It participates in quinol/quinone metabolism; 1,4-dihydroxy-2-naphthoate biosynthesis; 1,4-dihydroxy-2-naphthoate from chorismate: step 4/7. It functions in the pathway quinol/quinone metabolism; menaquinone biosynthesis. Functionally, converts 2-succinyl-6-hydroxy-2,4-cyclohexadiene-1-carboxylate (SHCHC) to 2-succinylbenzoate (OSB). This is o-succinylbenzoate synthase from Salmonella agona (strain SL483).